We begin with the raw amino-acid sequence, 378 residues long: Erythronate-4-phosphate dehydrogenase (378 aa).

Positions 45 and 66 each coordinate substrate. NAD(+) contacts are provided by D146 and T175. The active site involves R208. Position 232 (D232) interacts with NAD(+). E237 is a catalytic residue. H254 (proton donor) is an active-site residue. G257 contacts NAD(+). Position 258 (Y258) interacts with substrate.

This sequence belongs to the D-isomer specific 2-hydroxyacid dehydrogenase family. PdxB subfamily. As to quaternary structure, homodimer.

The protein localises to the cytoplasm. It catalyses the reaction 4-phospho-D-erythronate + NAD(+) = (R)-3-hydroxy-2-oxo-4-phosphooxybutanoate + NADH + H(+). The protein operates within cofactor biosynthesis; pyridoxine 5'-phosphate biosynthesis; pyridoxine 5'-phosphate from D-erythrose 4-phosphate: step 2/5. Its function is as follows. Catalyzes the oxidation of erythronate-4-phosphate to 3-hydroxy-2-oxo-4-phosphonooxybutanoate. The polypeptide is Erythronate-4-phosphate dehydrogenase (Shigella flexneri serotype 5b (strain 8401)).